We begin with the raw amino-acid sequence, 950 residues long: Protein translocase subunit SecA 1 (950 aa).

Residues Q83, 101–105 (GEGKT), and D490 each bind ATP. A disordered region spans residues 864–950 (EGGAGRKNAA…AKPPKSVKKR (87 aa)). A compositionally biased stretch (basic and acidic residues) spans 873–888 (AAREEAPSRLRAKGIE).

This sequence belongs to the SecA family. In terms of assembly, monomer and homodimer. Part of the essential Sec protein translocation apparatus which comprises SecA, SecYEG and auxiliary proteins SecDF. Other proteins may also be involved.

It is found in the cell membrane. It localises to the cytoplasm. It catalyses the reaction ATP + H2O + cellular proteinSide 1 = ADP + phosphate + cellular proteinSide 2.. In terms of biological role, part of the Sec protein translocase complex. Interacts with the SecYEG preprotein conducting channel. Has a central role in coupling the hydrolysis of ATP to the transfer of proteins into and across the cell membrane, serving as an ATP-driven molecular motor driving the stepwise translocation of polypeptide chains across the membrane. This Mycobacterium ulcerans (strain Agy99) protein is Protein translocase subunit SecA 1.